Here is a 298-residue protein sequence, read N- to C-terminus: uncharacterized protein (298 aa).

Residues 1–61 enclose the HTH lysR-type domain; that stretch reads MDIFISKKMR…TRKDNNISLN (61 aa). A DNA-binding region (H-T-H motif) is located at residues 21–40; the sequence is IARAAEKIHMTASPFGKSIA.

This sequence belongs to the LysR transcriptional regulatory family.

This is an uncharacterized protein from Escherichia coli (strain K12).